Here is a 348-residue protein sequence, read N- to C-terminus: NADH-ubiquinone oxidoreductase chain 2 (348 aa).

Helical transmembrane passes span 3-23, 24-44, 60-80, 95-115, 136-156, 177-197, 198-218, 239-259, 273-293, and 325-345; these read PFILSILLLSLGLGTTLTFAS, SHWLLAWMGLEISTLAIIPLM, FITQAAAAALILFASTTNAWI, ASMLTMALALKMGLAPVHFWL, LAPFILMCQIMPVNSSLITFL, ILAYSSIAHLGWMILVMQFNQ, QLALLALIIYIPMTFSTFMIF, LTAITPMILLSLGGLPPLSGF, DIPLTASIAALSALLSLYFYL, and LAISATISAMLLPLAPATLAL.

The protein belongs to the complex I subunit 2 family.

The protein resides in the mitochondrion inner membrane. It catalyses the reaction a ubiquinone + NADH + 5 H(+)(in) = a ubiquinol + NAD(+) + 4 H(+)(out). Functionally, core subunit of the mitochondrial membrane respiratory chain NADH dehydrogenase (Complex I) that is believed to belong to the minimal assembly required for catalysis. Complex I functions in the transfer of electrons from NADH to the respiratory chain. The immediate electron acceptor for the enzyme is believed to be ubiquinone. The sequence is that of NADH-ubiquinone oxidoreductase chain 2 (MT-ND2) from Gadus morhua (Atlantic cod).